Consider the following 350-residue polypeptide: Protein Wnt-2 (350 aa).

Residues 1 to 25 (MNFLPNGICFYLSVAICWFSSRVDA) form the signal peptide. 11 disulfides stabilise this stretch: cysteine 74–cysteine 85, cysteine 125–cysteine 133, cysteine 135–cysteine 155, cysteine 204–cysteine 218, cysteine 206–cysteine 213, cysteine 276–cysteine 307, cysteine 292–cysteine 302, cysteine 306–cysteine 346, cysteine 322–cysteine 337, cysteine 324–cysteine 334, and cysteine 329–cysteine 330. The N-linked (GlcNAc...) asparagine glycan is linked to asparagine 132. Serine 210 is lipidated: O-palmitoleoyl serine; by PORCN. A glycan (N-linked (GlcNAc...) asparagine) is linked at asparagine 293.

This sequence belongs to the Wnt family. In terms of processing, palmitoleoylation is required for efficient binding to frizzled receptors. Depalmitoleoylation leads to Wnt signaling pathway inhibition.

The protein localises to the secreted. The protein resides in the extracellular space. It localises to the extracellular matrix. Its function is as follows. Ligand for members of the frizzled family of seven transmembrane receptors. Functions in the canonical Wnt signaling pathway that results in activation of transcription factors of the TCF/LEF family. In Danio rerio (Zebrafish), this protein is Protein Wnt-2 (wnt2).